Here is a 323-residue protein sequence, read N- to C-terminus: Viral cathepsin (323 aa).

The signal sequence occupies residues 1–18 (MSKFLLYWFVYGVVCSAA). Residues 19 to 112 (YDILKAPNYF…VVLDRPPGKG (94 aa)) constitute a propeptide, activation peptide. Intrachain disulfides connect cysteine 133–cysteine 174, cysteine 167–cysteine 207, and cysteine 262–cysteine 310. Cysteine 136 is an active-site residue. N-linked (GlcNAc...) asparagine; by host glycosylation is present at asparagine 158. Residues histidine 269 and asparagine 289 contribute to the active site.

It belongs to the peptidase C1 family. Synthesized as an inactive proenzyme and activated by proteolytic removal of the inhibitory propeptide.

The catalysed reaction is Endopeptidase of broad specificity, hydrolyzing substrates of both cathepsin L and cathepsin B.. Functionally, cysteine protease that plays an essential role in host liquefaction to facilitate horizontal transmission of the virus. May participate in the degradation of foreign protein expressed by the baculovirus system. The polypeptide is Viral cathepsin (VCATH) (Lepidoptera (butterflies and moths)).